Consider the following 143-residue polypeptide: uncharacterized protein (143 aa).

The disordered stretch occupies residues 35–59 (ITKDRGDRDDGRYGEPRIQRKPGQL). The span at 36–52 (TKDRGDRDDGRYGEPRI) shows a compositional bias: basic and acidic residues.

This is an uncharacterized protein from Streptomyces fradiae (Streptomyces roseoflavus).